The primary structure comprises 146 residues: Ribonuclease H (146 aa).

The region spanning 1-143 (MKKRVTIYTD…CDELARQAIK (143 aa)) is the RNase H type-1 domain. Asp-10, Glu-48, Asp-70, and Asp-135 together coordinate Mg(2+).

This sequence belongs to the RNase H family. Monomer. The cofactor is Mg(2+).

The protein localises to the cytoplasm. The enzyme catalyses Endonucleolytic cleavage to 5'-phosphomonoester.. Its function is as follows. Endonuclease that specifically degrades the RNA of RNA-DNA hybrids. The sequence is that of Ribonuclease H from Chlorobium limicola (strain DSM 245 / NBRC 103803 / 6330).